Reading from the N-terminus, the 239-residue chain is uncharacterized protein (239 aa).

In terms of domain architecture, HTH cro/C1-type spans 13–66; that stretch reads IEYLVDKLNGPSEFARKTGVTLSTITRWRKGEADPSRSNLVKIAEVTGVSIEWL. The segment at residues 24–43 is a DNA-binding region (H-T-H motif); sequence SEFARKTGVTLSTITRWRKG.

This is an uncharacterized protein from Haemophilus influenzae (strain ATCC 51907 / DSM 11121 / KW20 / Rd).